The sequence spans 1023 residues: 2-oxoglutarate dehydrogenase complex component E1 (1023 aa).

The N-terminal 40 residues, 1-40 (MFHLRTCAAKLRPLTASQTVKTFSQNRPAAARTFQQIRCY), are a transit peptide targeting the mitochondrion. At K74 the chain carries N6-succinyllysine. The residue at position 100 (S100) is a Phosphoserine. 3 residues coordinate Ca(2+): H143, D156, and D158. R312 contacts thiamine diphosphate. K401 bears the N6-acetyllysine mark. The thiamine diphosphate site is built by D411, N444, and I446. 3 residues coordinate Mg(2+): D411, N444, and I446. K534 is covalently cross-linked (Glycyl lysine isopeptide (Lys-Gly) (interchain with G-Cter in ubiquitin)). N6-succinyllysine is present on K564. Position 676 (Q676) interacts with thiamine diphosphate. The residue at position 970 (K970) is an N6-acetyllysine.

It belongs to the alpha-ketoglutarate dehydrogenase family. As to quaternary structure, homodimer. The 2-oxoglutarate dehydrogenase complex is composed of OGDH (2-oxoglutarate dehydrogenase; E1), DLST (dihydrolipoamide succinyltransferase; E2), DLD (dihydrolipoamide dehydrogenase; E3) and the assembly factor KGD4. It contains multiple copies of the three enzymatic components (E1, E2 and E3). In the nucleus, the 2-oxoglutarate dehydrogenase complex associates with KAT2A. Interacts with ABHD11; this interaction maintains the functional lipoylation of the 2-oxoglutarate dehydrogenase complex. It depends on thiamine diphosphate as a cofactor. Requires Mg(2+) as cofactor.

The protein localises to the mitochondrion. The protein resides in the nucleus. It catalyses the reaction N(6)-[(R)-lipoyl]-L-lysyl-[protein] + 2-oxoglutarate + H(+) = N(6)-[(R)-S(8)-succinyldihydrolipoyl]-L-lysyl-[protein] + CO2. Calcium ions and ADP stimulate, whereas ATP and NADH reduce catalytic activity. 2-oxoglutarate dehydrogenase (E1o) component of the 2-oxoglutarate dehydrogenase complex (OGDHC). Participates in the first step, rate limiting for the overall conversion of 2-oxoglutarate to succinyl-CoA and CO(2) catalyzed by the whole OGDHC. Catalyzes the irreversible decarboxylation of 2-oxoglutarate (alpha-ketoglutarate) via the thiamine diphosphate (ThDP) cofactor and subsequent transfer of the decarboxylated acyl intermediate on an oxidized dihydrolipoyl group that is covalently amidated to the E2 enzyme (dihydrolipoyllysine-residue succinyltransferase or DLST). Plays a key role in the Krebs (citric acid) cycle, which is a common pathway for oxidation of fuel molecules, including carbohydrates, fatty acids, and amino acids. Can catalyze the decarboxylation of 2-oxoadipate in vitro, but at a much lower rate than 2-oxoglutarate. Mainly active in the mitochondrion. A fraction of the 2-oxoglutarate dehydrogenase complex also localizes in the nucleus and is required for lysine succinylation of histones: associates with KAT2A on chromatin and provides succinyl-CoA to histone succinyltransferase KAT2A. The polypeptide is 2-oxoglutarate dehydrogenase complex component E1 (Pongo abelii (Sumatran orangutan)).